A 512-amino-acid chain; its full sequence is Probable cytosol aminopeptidase (512 aa).

Lys281 and Asp286 together coordinate Mn(2+). Lys293 is an active-site residue. Residues Asp304, Asp363, and Glu365 each coordinate Mn(2+). Residue Arg367 is part of the active site.

The protein belongs to the peptidase M17 family. Mn(2+) is required as a cofactor.

The protein localises to the cytoplasm. It catalyses the reaction Release of an N-terminal amino acid, Xaa-|-Yaa-, in which Xaa is preferably Leu, but may be other amino acids including Pro although not Arg or Lys, and Yaa may be Pro. Amino acid amides and methyl esters are also readily hydrolyzed, but rates on arylamides are exceedingly low.. It carries out the reaction Release of an N-terminal amino acid, preferentially leucine, but not glutamic or aspartic acids.. Presumably involved in the processing and regular turnover of intracellular proteins. Catalyzes the removal of unsubstituted N-terminal amino acids from various peptides. This chain is Probable cytosol aminopeptidase, found in Koribacter versatilis (strain Ellin345).